The following is a 244-amino-acid chain: 1-(5-phosphoribosyl)-5-[(5-phosphoribosylamino)methylideneamino] imidazole-4-carboxamide isomerase (244 aa).

D10 acts as the Proton acceptor in catalysis. The active-site Proton donor is the D132.

Belongs to the HisA/HisF family.

It localises to the cytoplasm. It carries out the reaction 1-(5-phospho-beta-D-ribosyl)-5-[(5-phospho-beta-D-ribosylamino)methylideneamino]imidazole-4-carboxamide = 5-[(5-phospho-1-deoxy-D-ribulos-1-ylimino)methylamino]-1-(5-phospho-beta-D-ribosyl)imidazole-4-carboxamide. The protein operates within amino-acid biosynthesis; L-histidine biosynthesis; L-histidine from 5-phospho-alpha-D-ribose 1-diphosphate: step 4/9. This Xanthomonas oryzae pv. oryzae (strain MAFF 311018) protein is 1-(5-phosphoribosyl)-5-[(5-phosphoribosylamino)methylideneamino] imidazole-4-carboxamide isomerase.